An 864-amino-acid polypeptide reads, in one-letter code: DNA mismatch repair protein MutS (864 aa).

607 to 614 (GPNMGGKS) is a binding site for ATP.

Belongs to the DNA mismatch repair MutS family.

In terms of biological role, this protein is involved in the repair of mismatches in DNA. It is possible that it carries out the mismatch recognition step. This protein has a weak ATPase activity. This chain is DNA mismatch repair protein MutS, found in Neisseria meningitidis serogroup B (strain ATCC BAA-335 / MC58).